Reading from the N-terminus, the 718-residue chain is Polyribonucleotide nucleotidyltransferase (718 aa).

The Mg(2+) site is built by aspartate 491 and aspartate 497. The region spanning 558–617 is the KH domain; that stretch reads PRMLTIKINPEKIRDVIGKGGATIRALTEETGTQIDISDDGTIVIASVDEGQAKEAQRRI. The S1 motif domain maps to 627-695; the sequence is GQVYDGSVLR…EKGRLRLSVK (69 aa).

This sequence belongs to the polyribonucleotide nucleotidyltransferase family. Mg(2+) is required as a cofactor.

The protein localises to the cytoplasm. The catalysed reaction is RNA(n+1) + phosphate = RNA(n) + a ribonucleoside 5'-diphosphate. Its function is as follows. Involved in mRNA degradation. Catalyzes the phosphorolysis of single-stranded polyribonucleotides processively in the 3'- to 5'-direction. This chain is Polyribonucleotide nucleotidyltransferase, found in Bordetella avium (strain 197N).